Here is a 441-residue protein sequence, read N- to C-terminus: Enolase (441 aa).

Gln-164 provides a ligand contact to (2R)-2-phosphoglycerate. Glu-206 serves as the catalytic Proton donor. 3 residues coordinate Mg(2+): Asp-243, Glu-289, and Asp-316. Residues Lys-341, Arg-370, Ser-371, and Lys-392 each contribute to the (2R)-2-phosphoglycerate site. The active-site Proton acceptor is Lys-341.

The protein belongs to the enolase family. Mg(2+) serves as cofactor.

It is found in the cytoplasm. Its subcellular location is the secreted. The protein resides in the cell surface. The enzyme catalyses (2R)-2-phosphoglycerate = phosphoenolpyruvate + H2O. It participates in carbohydrate degradation; glycolysis; pyruvate from D-glyceraldehyde 3-phosphate: step 4/5. Functionally, catalyzes the reversible conversion of 2-phosphoglycerate (2-PG) into phosphoenolpyruvate (PEP). It is essential for the degradation of carbohydrates via glycolysis. This is Enolase from Leuconostoc citreum (strain KM20).